The primary structure comprises 340 residues: Flap endonuclease 1 (340 aa).

Residues 1 to 98 are N-domain; that stretch reads MGVPIGEIIP…KELEKRREAR (98 aa). Mg(2+) contacts are provided by aspartate 27, aspartate 80, glutamate 152, glutamate 154, aspartate 173, aspartate 175, and aspartate 236. Residues 116–258 form an I-domain region; it reads EARKYAQRAT…KALEIVRHSK (143 aa). The interval 330–338 is interaction with PCNA; that stretch reads KQSTLESWF.

Belongs to the XPG/RAD2 endonuclease family. FEN1 subfamily. In terms of assembly, interacts with PCNA. PCNA stimulates the nuclease activity without altering cleavage specificity. Requires Mg(2+) as cofactor.

Its function is as follows. Structure-specific nuclease with 5'-flap endonuclease and 5'-3' exonuclease activities involved in DNA replication and repair. During DNA replication, cleaves the 5'-overhanging flap structure that is generated by displacement synthesis when DNA polymerase encounters the 5'-end of a downstream Okazaki fragment. Binds the unpaired 3'-DNA end and kinks the DNA to facilitate 5' cleavage specificity. Cleaves one nucleotide into the double-stranded DNA from the junction in flap DNA, leaving a nick for ligation. Also involved in the base excision repair (BER) pathway. Acts as a genome stabilization factor that prevents flaps from equilibrating into structures that lead to duplications and deletions. Also possesses 5'-3' exonuclease activity on nicked or gapped double-stranded DNA. The protein is Flap endonuclease 1 of Pyrococcus furiosus (strain ATCC 43587 / DSM 3638 / JCM 8422 / Vc1).